The chain runs to 305 residues: LysM and putative peptidoglycan-binding domain-containing protein 3 (305 aa).

Over 1-221 (MTGRNQHNGF…PYYGADWGMR (221 aa)) the chain is Extracellular. Asn-29 is a glycosylation site (N-linked (GlcNAc...) asparagine). The interval 31–60 (SETEYSEEDGEAFELRSRGRERHHRSTSRD) is disordered. Residues 68–112 (LIREIKEGDTLISISLQYFCTVADIKRANNLLTEQDFFALRSLRI) enclose the LysM domain. Residues 121-144 (TETHNTAPHKSSSPSGTCRITETP) show a composition bias toward polar residues. A disordered region spans residues 121-156 (TETHNTAPHKSSSPSGTCRITETPVSGASLDSTSSS). Positions 146–156 (SGASLDSTSSS) are enriched in low complexity. The chain crosses the membrane as a helical span at residues 222–242 (WWTAVAIMLVVGIVTPVFYLL). Residues 243–305 (YYEVLMKADV…QHHVKHQEET (63 aa)) are Cytoplasmic-facing.

The protein localises to the cell membrane. It localises to the golgi apparatus. In terms of biological role, essential for Golgi structural integrity. This chain is LysM and putative peptidoglycan-binding domain-containing protein 3 (lysmd3), found in Danio rerio (Zebrafish).